A 145-amino-acid chain; its full sequence is D-aminoacyl-tRNA deacylase (145 aa).

The Gly-cisPro motif, important for rejection of L-amino acids motif lies at 137 to 138; it reads GP.

It belongs to the DTD family. As to quaternary structure, homodimer.

It localises to the cytoplasm. It catalyses the reaction glycyl-tRNA(Ala) + H2O = tRNA(Ala) + glycine + H(+). The enzyme catalyses a D-aminoacyl-tRNA + H2O = a tRNA + a D-alpha-amino acid + H(+). An aminoacyl-tRNA editing enzyme that deacylates mischarged D-aminoacyl-tRNAs. Also deacylates mischarged glycyl-tRNA(Ala), protecting cells against glycine mischarging by AlaRS. Acts via tRNA-based rather than protein-based catalysis; rejects L-amino acids rather than detecting D-amino acids in the active site. By recycling D-aminoacyl-tRNA to D-amino acids and free tRNA molecules, this enzyme counteracts the toxicity associated with the formation of D-aminoacyl-tRNA entities in vivo and helps enforce protein L-homochirality. This Stutzerimonas stutzeri (strain A1501) (Pseudomonas stutzeri) protein is D-aminoacyl-tRNA deacylase.